The sequence spans 54 residues: IASVNCSDYPKPVCSLLYMPLCGSDNKTYGNKCNFCNAVADSNGTLTLSHFGKC.

Positions V4–C54 constitute a Kazal-like domain. Cystine bridges form between C6-C36, C14-C33, and C22-C54. N43 carries an N-linked (GlcNAc...) asparagine glycan.

Its subcellular location is the secreted. In Geococcyx californianus (Greater roadrunner), this protein is Ovomucoid.